A 435-amino-acid polypeptide reads, in one-letter code: Methylenetetrahydrofolate--tRNA-(uracil-5-)-methyltransferase TrmFO (435 aa).

Residue 7-12 participates in FAD binding; the sequence is GAGLAG.

It belongs to the MnmG family. TrmFO subfamily. Requires FAD as cofactor.

It is found in the cytoplasm. It carries out the reaction uridine(54) in tRNA + (6R)-5,10-methylene-5,6,7,8-tetrahydrofolate + NADH + H(+) = 5-methyluridine(54) in tRNA + (6S)-5,6,7,8-tetrahydrofolate + NAD(+). The enzyme catalyses uridine(54) in tRNA + (6R)-5,10-methylene-5,6,7,8-tetrahydrofolate + NADPH + H(+) = 5-methyluridine(54) in tRNA + (6S)-5,6,7,8-tetrahydrofolate + NADP(+). In terms of biological role, catalyzes the folate-dependent formation of 5-methyl-uridine at position 54 (M-5-U54) in all tRNAs. The polypeptide is Methylenetetrahydrofolate--tRNA-(uracil-5-)-methyltransferase TrmFO (Thermotoga maritima (strain ATCC 43589 / DSM 3109 / JCM 10099 / NBRC 100826 / MSB8)).